The sequence spans 94 residues: Potassium channel protein kcv (94 aa).

The chain crosses the membrane as a helical span at residues 14-34; it reads FMIHLFILAMFVMIYKFFPGG. A glycan (N-linked (GlcNAc...) asparagine; by host) is linked at N38. The helical transmembrane segment at 74–94 threads the bilayer; the sequence is TGAKLCTIAHIVTVFFIVLTL.

It belongs to the two pore domain potassium channel (TC 1.A.1.12) family.

Its subcellular location is the membrane. Functionally, potassium-selective channel essential in the virus replication cycle. May be involved in preventing multiple infections (Potential). The polypeptide is Potassium channel protein kcv (A250R) (Paramecium bursaria Chlorella virus 1 (PBCV-1)).